Consider the following 1164-residue polypeptide: Protein PLASTID MOVEMENT IMPAIRED 1-RELATED 1 (1164 aa).

Residues 30–54 (KNPRGSVAGSNKTPTKPLSRSNLAE) form a disordered region. The segment covering 37–51 (AGSNKTPTKPLSRSN) has biased composition (polar residues). Residues 69 to 217 (INHVRNRRFN…TLSMSFGYTV (149 aa)) enclose the C2 NT-type domain. Residues 224-263 (PASSGSTQNFRSSSNVKQTSNNTGLTRAISAKSSLGNGKS) are compositionally biased toward polar residues. Disordered regions lie at residues 224–268 (PASS…SRRY), 466–486 (APEE…PKDA), 1038–1063 (SELK…PMEE), and 1124–1164 (GSAK…IMPK). Basic and acidic residues-rich tracts occupy residues 469 to 486 (EGNK…PKDA) and 1052 to 1062 (SDAKKEEKPME).

The protein resides in the cytoplasm. In terms of biological role, together with PMI1, necessary for chloroplast and nuclear photorelocation movements via the regulation of chloroplast-actin (cp-actin) filaments in pavement cells. This is Protein PLASTID MOVEMENT IMPAIRED 1-RELATED 1 from Arabidopsis thaliana (Mouse-ear cress).